The chain runs to 157 residues: Probable Brix domain-containing ribosomal biogenesis protein (157 aa).

One can recognise a Brix domain in the interval 1 to 157 (MLVTSSRKPS…KLNLRGFKKY (157 aa)).

Probably involved in the biogenesis of the ribosome. In Methanosarcina barkeri (strain Fusaro / DSM 804), this protein is Probable Brix domain-containing ribosomal biogenesis protein.